The primary structure comprises 113 residues: Large ribosomal subunit protein bL19 (113 aa).

It belongs to the bacterial ribosomal protein bL19 family.

Functionally, this protein is located at the 30S-50S ribosomal subunit interface and may play a role in the structure and function of the aminoacyl-tRNA binding site. This Carboxydothermus hydrogenoformans (strain ATCC BAA-161 / DSM 6008 / Z-2901) protein is Large ribosomal subunit protein bL19.